We begin with the raw amino-acid sequence, 100 residues long: Urease subunit gamma (100 aa).

Belongs to the urease gamma subunit family. In terms of assembly, heterotrimer of UreA (gamma), UreB (beta) and UreC (alpha) subunits. Three heterotrimers associate to form the active enzyme.

The protein resides in the cytoplasm. It catalyses the reaction urea + 2 H2O + H(+) = hydrogencarbonate + 2 NH4(+). The protein operates within nitrogen metabolism; urea degradation; CO(2) and NH(3) from urea (urease route): step 1/1. The polypeptide is Urease subunit gamma (Bradyrhizobium diazoefficiens (strain JCM 10833 / BCRC 13528 / IAM 13628 / NBRC 14792 / USDA 110)).